Here is a 320-residue protein sequence, read N- to C-terminus: Malate dehydrogenase (320 aa).

NAD(+) is bound by residues 10 to 15 (GSGMIG) and Asp-34. Residues Arg-83 and Arg-89 each contribute to the substrate site. NAD(+)-binding positions include Asn-96 and 119-121 (ITN). Substrate contacts are provided by Asn-121 and Arg-152. His-176 acts as the Proton acceptor in catalysis.

It belongs to the LDH/MDH superfamily. MDH type 3 family.

The enzyme catalyses (S)-malate + NAD(+) = oxaloacetate + NADH + H(+). Catalyzes the reversible oxidation of malate to oxaloacetate. In Maricaulis maris (strain MCS10) (Caulobacter maris), this protein is Malate dehydrogenase.